Here is a 117-residue protein sequence, read N- to C-terminus: Putative membrane protein insertion efficiency factor (117 aa).

The tract at residues 87-117 is disordered; the sequence is RKGGPSAAEPAIEGHIPSSPAAETPSHVQGA.

The protein belongs to the UPF0161 family.

Its subcellular location is the cell membrane. Could be involved in insertion of integral membrane proteins into the membrane. This chain is Putative membrane protein insertion efficiency factor, found in Streptomyces avermitilis (strain ATCC 31267 / DSM 46492 / JCM 5070 / NBRC 14893 / NCIMB 12804 / NRRL 8165 / MA-4680).